Reading from the N-terminus, the 167-residue chain is NADH-ubiquinone oxidoreductase chain 6 (167 aa).

The next 4 membrane-spanning stretches (helical) occupy residues 24–44 (PYFGALGLIVVSLVGCLIILA), 54–74 (LLLIYLGGMMVVFSYCTALVL), 85–105 (VLMKMALGVLVVVFLGYGGYL), and 135–155 (WLLIVFGCLGLFLALLVILEI).

It belongs to the complex I subunit 6 family.

It localises to the mitochondrion membrane. The catalysed reaction is a ubiquinone + NADH + 5 H(+)(in) = a ubiquinol + NAD(+) + 4 H(+)(out). Functionally, core subunit of the mitochondrial membrane respiratory chain NADH dehydrogenase (Complex I) that is believed to belong to the minimal assembly required for catalysis. Complex I functions in the transfer of electrons from NADH to the respiratory chain. The immediate electron acceptor for the enzyme is believed to be ubiquinone. The polypeptide is NADH-ubiquinone oxidoreductase chain 6 (MT-ND6) (Myxine glutinosa (Atlantic hagfish)).